We begin with the raw amino-acid sequence, 337 residues long: MSEPRKLEVLRAIVEDYVHSREPVGSKALVERHHLGVSSATIRNDMAALEDEGLITAPHTSAGRIPTDKGYRLFVDQISAVKPLSQAERRAIQTLLEGSEDLDDVLERTVRLLSQLTNQVAVVQYPHLSRAMVRHIEFVLLAPRQVLIVLIADTGKVEQRVIDVGQELGDDALAGLRARFLKSLAGTPLSLLPQALPAVVAGCEPSRRHAAQALARGLDALASSSREERMVMAGTANLARSNVDFPLSIGPVLEALEEQVVMLRLLSDMAQDPRGVTVSIGRENPYDGLAEASVVATGYGPGSSAKVGVLGPTRMDYPTTMAAVRAVARYLSRILGP.

Belongs to the HrcA family.

Negative regulator of class I heat shock genes (grpE-dnaK-dnaJ and groELS operons). Prevents heat-shock induction of these operons. This chain is Heat-inducible transcription repressor HrcA, found in Arthrobacter sp. (strain FB24).